A 94-amino-acid polypeptide reads, in one-letter code: Putative pterin-4-alpha-carbinolamine dehydratase (94 aa).

It belongs to the pterin-4-alpha-carbinolamine dehydratase family.

The catalysed reaction is (4aS,6R)-4a-hydroxy-L-erythro-5,6,7,8-tetrahydrobiopterin = (6R)-L-erythro-6,7-dihydrobiopterin + H2O. This is Putative pterin-4-alpha-carbinolamine dehydratase from Mycobacterium sp. (strain KMS).